The sequence spans 144 residues: 3-dehydroquinate dehydratase (144 aa).

The active-site Proton acceptor is the Y24. The substrate site is built by N73, H79, and D86. H99 (proton donor) is an active-site residue. Substrate contacts are provided by residues 100 to 101 (LS) and R110.

The protein belongs to the type-II 3-dehydroquinase family. In terms of assembly, homododecamer.

The catalysed reaction is 3-dehydroquinate = 3-dehydroshikimate + H2O. It participates in metabolic intermediate biosynthesis; chorismate biosynthesis; chorismate from D-erythrose 4-phosphate and phosphoenolpyruvate: step 3/7. In terms of biological role, catalyzes a trans-dehydration via an enolate intermediate. The polypeptide is 3-dehydroquinate dehydratase (Shewanella sp. (strain MR-4)).